The chain runs to 315 residues: Adenine deaminase (315 aa).

Residues His-14, His-16, and His-194 each coordinate Zn(2+). Catalysis depends on Glu-197, which acts as the Proton donor. Residue Asp-275 participates in Zn(2+) binding. Asp-276 contacts substrate.

Belongs to the metallo-dependent hydrolases superfamily. Adenosine and AMP deaminases family. Adenine deaminase type 2 subfamily. Zn(2+) serves as cofactor.

The catalysed reaction is adenine + H2O + H(+) = hypoxanthine + NH4(+). In terms of biological role, catalyzes the hydrolytic deamination of adenine to hypoxanthine. Plays an important role in the purine salvage pathway and in nitrogen catabolism. The protein is Adenine deaminase of Pseudomonas putida (strain ATCC 47054 / DSM 6125 / CFBP 8728 / NCIMB 11950 / KT2440).